We begin with the raw amino-acid sequence, 254 residues long: 5-oxoprolinase subunit A (254 aa).

Belongs to the LamB/PxpA family. As to quaternary structure, forms a complex composed of PxpA, PxpB and PxpC.

The catalysed reaction is 5-oxo-L-proline + ATP + 2 H2O = L-glutamate + ADP + phosphate + H(+). In terms of biological role, catalyzes the cleavage of 5-oxoproline to form L-glutamate coupled to the hydrolysis of ATP to ADP and inorganic phosphate. In Burkholderia thailandensis (strain ATCC 700388 / DSM 13276 / CCUG 48851 / CIP 106301 / E264), this protein is 5-oxoprolinase subunit A.